The sequence spans 377 residues: Succinyl-diaminopimelate desuccinylase (377 aa).

Residue histidine 68 coordinates Zn(2+). Aspartate 70 is an active-site residue. Position 101 (aspartate 101) interacts with Zn(2+). Glutamate 135 serves as the catalytic Proton acceptor. Glutamate 136, glutamate 164, and histidine 350 together coordinate Zn(2+).

Belongs to the peptidase M20A family. DapE subfamily. As to quaternary structure, homodimer. The cofactor is Zn(2+). Requires Co(2+) as cofactor.

The enzyme catalyses N-succinyl-(2S,6S)-2,6-diaminopimelate + H2O = (2S,6S)-2,6-diaminopimelate + succinate. Its pathway is amino-acid biosynthesis; L-lysine biosynthesis via DAP pathway; LL-2,6-diaminopimelate from (S)-tetrahydrodipicolinate (succinylase route): step 3/3. Its function is as follows. Catalyzes the hydrolysis of N-succinyl-L,L-diaminopimelic acid (SDAP), forming succinate and LL-2,6-diaminopimelate (DAP), an intermediate involved in the bacterial biosynthesis of lysine and meso-diaminopimelic acid, an essential component of bacterial cell walls. This chain is Succinyl-diaminopimelate desuccinylase, found in Aliivibrio fischeri (strain ATCC 700601 / ES114) (Vibrio fischeri).